We begin with the raw amino-acid sequence, 274 residues long: 4-hydroxy-3-methylbut-2-enyl diphosphate reductase (274 aa).

A [4Fe-4S] cluster-binding site is contributed by cysteine 12. Positions 36 and 70 each coordinate (2E)-4-hydroxy-3-methylbut-2-enyl diphosphate. The dimethylallyl diphosphate site is built by histidine 36 and histidine 70. Isopentenyl diphosphate-binding residues include histidine 36 and histidine 70. Cysteine 92 contacts [4Fe-4S] cluster. Residue histidine 120 participates in (2E)-4-hydroxy-3-methylbut-2-enyl diphosphate binding. A dimethylallyl diphosphate-binding site is contributed by histidine 120. An isopentenyl diphosphate-binding site is contributed by histidine 120. The Proton donor role is filled by glutamate 122. (2E)-4-hydroxy-3-methylbut-2-enyl diphosphate is bound at residue threonine 158. Cysteine 186 contributes to the [4Fe-4S] cluster binding site. (2E)-4-hydroxy-3-methylbut-2-enyl diphosphate contacts are provided by serine 214, serine 215, asparagine 216, and serine 258. 4 residues coordinate dimethylallyl diphosphate: serine 214, serine 215, asparagine 216, and serine 258. Isopentenyl diphosphate is bound by residues serine 214, serine 215, asparagine 216, and serine 258.

Belongs to the IspH family. It depends on [4Fe-4S] cluster as a cofactor.

It carries out the reaction isopentenyl diphosphate + 2 oxidized [2Fe-2S]-[ferredoxin] + H2O = (2E)-4-hydroxy-3-methylbut-2-enyl diphosphate + 2 reduced [2Fe-2S]-[ferredoxin] + 2 H(+). It catalyses the reaction dimethylallyl diphosphate + 2 oxidized [2Fe-2S]-[ferredoxin] + H2O = (2E)-4-hydroxy-3-methylbut-2-enyl diphosphate + 2 reduced [2Fe-2S]-[ferredoxin] + 2 H(+). It participates in isoprenoid biosynthesis; dimethylallyl diphosphate biosynthesis; dimethylallyl diphosphate from (2E)-4-hydroxy-3-methylbutenyl diphosphate: step 1/1. The protein operates within isoprenoid biosynthesis; isopentenyl diphosphate biosynthesis via DXP pathway; isopentenyl diphosphate from 1-deoxy-D-xylulose 5-phosphate: step 6/6. Its function is as follows. Catalyzes the conversion of 1-hydroxy-2-methyl-2-(E)-butenyl 4-diphosphate (HMBPP) into a mixture of isopentenyl diphosphate (IPP) and dimethylallyl diphosphate (DMAPP). Acts in the terminal step of the DOXP/MEP pathway for isoprenoid precursor biosynthesis. In Campylobacter curvus (strain 525.92), this protein is 4-hydroxy-3-methylbut-2-enyl diphosphate reductase.